Consider the following 442-residue polypeptide: Putative FNIP repeat-containing protein L170 (442 aa).

FNIP repeat units follow at residues 213-252 (FNSSINSLRNNIRVLKLGNSFNKPIDILPELLEELYIGRG), 253-294 (FNSE…LGCF), and 295-348 (FNQS…FGMY).

This Acanthamoeba polyphaga mimivirus (APMV) protein is Putative FNIP repeat-containing protein L170.